A 197-amino-acid polypeptide reads, in one-letter code: Putative RNA polymerase II subunit B1 CTD phosphatase rtr1 (197 aa).

The RTR1-type zinc finger occupies 60 to 139; that stretch reads EARKYLRKSD…LSDEPLWIRE (80 aa). Positions 83, 88, 115, and 119 each coordinate Zn(2+).

The protein belongs to the RPAP2 family.

It is found in the cytoplasm. It localises to the nucleus. It catalyses the reaction O-phospho-L-seryl-[protein] + H2O = L-seryl-[protein] + phosphate. The catalysed reaction is O-phospho-L-threonyl-[protein] + H2O = L-threonyl-[protein] + phosphate. In terms of biological role, putative RNA polymerase II subunit B1 C-terminal domain (CTD) phosphatase involved in RNA polymerase II transcription regulation. The protein is Putative RNA polymerase II subunit B1 CTD phosphatase rtr1 of Schizosaccharomyces pombe (strain 972 / ATCC 24843) (Fission yeast).